The chain runs to 1212 residues: uncharacterized protein (1212 aa).

Positions 1–31 (MASIQTKLVSQPQTQQPLQNGFFNNYQQNIY) are enriched in polar residues. 7 disordered regions span residues 1-70 (MASI…HLQQ), 119-169 (PQAQ…FGTN), 211-231 (SLNN…SNNN), 248-374 (INIG…NNNK), 655-681 (QQQP…TQQQ), 935-957 (NQNQ…CNNA), and 973-1125 (QLQP…QQLQ). Composition is skewed to low complexity over residues 48 to 70 (PQQQ…HLQQ) and 119 to 163 (PQAQ…NNNN). Residues 256-275 (NNSNTNNVNNINTNNTNNNN) show a composition bias toward low complexity. 2 stretches are compositionally biased toward polar residues: residues 276-285 (KSGSIDQFGS) and 292-317 (YVNS…SHSP). Positions 322-340 (INSNININSNLQSPQNIQQ) are enriched in low complexity. Residues 341–351 (TILSPNISPNH) show a composition bias toward polar residues. The span at 352-373 (NNNNNNNNNNNNNNNNNNNNNN) shows a compositional bias: low complexity. 2 stretches are compositionally biased toward low complexity: residues 998–1022 (NSVN…NNNN) and 1037–1125 (QNNN…QQLQ).

This is an uncharacterized protein from Dictyostelium discoideum (Social amoeba).